The sequence spans 132 residues: Phosphoribosyl-AMP cyclohydrolase (132 aa).

Residue Asp79 participates in Mg(2+) binding. Residue Cys80 coordinates Zn(2+). 2 residues coordinate Mg(2+): Asp81 and Asp83. Zn(2+) contacts are provided by Cys100 and Cys107.

This sequence belongs to the PRA-CH family. Homodimer. Mg(2+) is required as a cofactor. Zn(2+) serves as cofactor.

The protein localises to the cytoplasm. The catalysed reaction is 1-(5-phospho-beta-D-ribosyl)-5'-AMP + H2O = 1-(5-phospho-beta-D-ribosyl)-5-[(5-phospho-beta-D-ribosylamino)methylideneamino]imidazole-4-carboxamide. The protein operates within amino-acid biosynthesis; L-histidine biosynthesis; L-histidine from 5-phospho-alpha-D-ribose 1-diphosphate: step 3/9. Functionally, catalyzes the hydrolysis of the adenine ring of phosphoribosyl-AMP. The sequence is that of Phosphoribosyl-AMP cyclohydrolase from Delftia acidovorans (strain DSM 14801 / SPH-1).